The sequence spans 1215 residues: MYVKQIIIQGFKSYKDQTVIEPFSPKHNVIVGRNGSGKSNFFAAIRFVLSDAYTHLGREERQALLHEGSGSAVMSAYVEIIFDNSDERFPTGKPELVLRRTIGLKKDEYTLDRKNATKNDVMNLLESAGFSRSNPYYIVPQGRVTALTNMKDSERLNLLKEVAGTQVYEARRAESLKIMHETNSKREKIDELLDFINERLAELEEEKDELRNFQEKDKERRCLEYTIYSREQQEIASFLDSLEEQRQTGVEDTDINRDRFIQGEKEMAQVDAEIAECKQQIEFLKVDKAQLEDERREASKALAQVELQAKSLSDNQAAAQESKARHDESLKAVQSAIEERQTELKELVPRFISAKDAEDAARAKLTEAETARQRLYAKQGRNSRFKNKSERDKWLQAEIKNNNASISSVQSVLSQTQEDINDIENDIALLEPETERLRQQIDGRGDTIQSVEQQVQAAKDERDRLMDQRKYVDWPRTSCATLTIHRELWREEAKLDSILINASNEVDRAERNLSQMMDHNTSRGIAAVRRIKRQHNLEGVYGTLAELFEVNDRYRTAVEVTAGQSLFHYVVDTDDTATKVLEILQHEKAGRVTFMPLNRLRTKPLNMPKASDTIPMIEKLQYDRAYEKAFQHVFGKTIICPNLQVASQYARSHGVNATTPEGDRSDKRGALTGGFHDSRQSRLDAVKNLAKWRDEYETKKSRGSEIRKELEELDQLITRAVGELQKLEQQRHQVQNSSGPLRQELRSKRDLLQKQNDNLDAKRRALRNIEGNLAALKDQVDAFEAELSSPFHKALTDEEEARLESLNSNVQEYRREYQELSGKRSELETRKSVLEVELRENLNPRLDQLLAQDADIADEDGQGNIKETQREQKRLTKVLDKLAQRLAQVDESMEQANSRVTELTQRNAESRRELEELAKSIEKHQRRMEKSMQKKAALTKQAAECAANIRDLGVLPDEAFTKYKNTDSNTVVKKLHKVNEALKKYAHVNKKAFEQYNNFTKQRETLTSRREELDASQKSIDDLISVLDHRKDEAIERTFKQVSREFATIFEKLVPAGRGRLIIQRKTDRTQRAEDDLESEDEEAKHSVENYVGVGISVSFNSKHDDQQRIQQLSGGQKSLCALALVFAIQACDPAPFYLFDEIDANLDAQYRTAVAQMLKTISDSTNGQFICTTFRPEMLHVAEKCYGVSFRQKASTIDVVSREEALKFVEEQKS.

An ATP-binding site is contributed by 32-39; sequence GRNGSGKS. The stretch at 177 to 522 forms a coiled coil; that stretch reads KIMHETNSKR…LSQMMDHNTS (346 aa). Residues 313–332 form a disordered region; that stretch reads SDNQAAAQESKARHDESLKA. Residues 538 to 650 form the SMC hinge domain; sequence EGVYGTLAEL…PNLQVASQYA (113 aa). The segment at 654-676 is disordered; the sequence is GVNATTPEGDRSDKRGALTGGFH. Residues 684–1091 adopt a coiled-coil conformation; sequence DAVKNLAKWR…EEAKHSVENY (408 aa).

The protein belongs to the SMC family. SMC3 subfamily.

It is found in the nucleus. Its function is as follows. Involved in chromosome segregation in mitosis. In Emericella nidulans (strain FGSC A4 / ATCC 38163 / CBS 112.46 / NRRL 194 / M139) (Aspergillus nidulans), this protein is Chromosome segregation protein sudA (sudA).